A 161-amino-acid chain; its full sequence is Nucleotide-binding protein Aave_1854 (161 aa).

This sequence belongs to the YajQ family.

Its function is as follows. Nucleotide-binding protein. The chain is Nucleotide-binding protein Aave_1854 from Paracidovorax citrulli (strain AAC00-1) (Acidovorax citrulli).